Reading from the N-terminus, the 144-residue chain is Endoribonuclease YbeY (144 aa).

Zn(2+) is bound by residues His104, His108, and His114.

The protein belongs to the endoribonuclease YbeY family. It depends on Zn(2+) as a cofactor.

It is found in the cytoplasm. Its function is as follows. Single strand-specific metallo-endoribonuclease involved in late-stage 70S ribosome quality control and in maturation of the 3' terminus of the 16S rRNA. In Nitratiruptor sp. (strain SB155-2), this protein is Endoribonuclease YbeY.